The chain runs to 270 residues: 4-hydroxy-tetrahydrodipicolinate reductase (270 aa).

NAD(+) is bound by residues 9–14 and Glu-35; that span reads GSGGRM. Arg-36 lines the NADP(+) pocket. Residues 99-101 and 123-126 each bind NAD(+); these read GTT and ASNY. The active-site Proton donor/acceptor is the His-156. His-157 is a binding site for (S)-2,3,4,5-tetrahydrodipicolinate. Lys-160 functions as the Proton donor in the catalytic mechanism. 166-167 is a binding site for (S)-2,3,4,5-tetrahydrodipicolinate; the sequence is GT.

The protein belongs to the DapB family.

Its subcellular location is the cytoplasm. The catalysed reaction is (S)-2,3,4,5-tetrahydrodipicolinate + NAD(+) + H2O = (2S,4S)-4-hydroxy-2,3,4,5-tetrahydrodipicolinate + NADH + H(+). It catalyses the reaction (S)-2,3,4,5-tetrahydrodipicolinate + NADP(+) + H2O = (2S,4S)-4-hydroxy-2,3,4,5-tetrahydrodipicolinate + NADPH + H(+). It participates in amino-acid biosynthesis; L-lysine biosynthesis via DAP pathway; (S)-tetrahydrodipicolinate from L-aspartate: step 4/4. Functionally, catalyzes the conversion of 4-hydroxy-tetrahydrodipicolinate (HTPA) to tetrahydrodipicolinate. The chain is 4-hydroxy-tetrahydrodipicolinate reductase from Histophilus somni (strain 2336) (Haemophilus somnus).